The sequence spans 474 residues: L-lactate permease (474 aa).

11 helical membrane-spanning segments follow: residues 4–21, 28–48, 63–85, 105–127, 142–164, 177–199, 209–231, 238–255, 281–303, 324–346, and 387–409; these read AILA…LAVF, ACFI…HFSI, FWPI…ASGG, LILA…AVAI, AALI…LPVT, LSVI…LVSL, GVFG…VSNY, SIIG…FVNL, FILV…QLLA, WLTS…QGMS, and IAVS…IGTL.

It belongs to the lactate permease family.

It localises to the cell membrane. Functionally, plays a role in L-lactate utilization. This is L-lactate permease (lctP) from Streptococcus iniae (Streptococcus shiloi).